The sequence spans 325 residues: Beta-ketoacyl-[acyl-carrier-protein] synthase III (325 aa).

Active-site residues include cysteine 116 and histidine 252. The ACP-binding stretch occupies residues 253 to 257 (QANLR). Residue asparagine 282 is part of the active site.

Belongs to the thiolase-like superfamily. FabH family. In terms of assembly, homodimer.

It is found in the cytoplasm. The enzyme catalyses malonyl-[ACP] + acetyl-CoA + H(+) = 3-oxobutanoyl-[ACP] + CO2 + CoA. It participates in lipid metabolism; fatty acid biosynthesis. Its function is as follows. Catalyzes the condensation reaction of fatty acid synthesis by the addition to an acyl acceptor of two carbons from malonyl-ACP. Catalyzes the first condensation reaction which initiates fatty acid synthesis and may therefore play a role in governing the total rate of fatty acid production. Possesses both acetoacetyl-ACP synthase and acetyl transacylase activities. Its substrate specificity determines the biosynthesis of branched-chain and/or straight-chain of fatty acids. The protein is Beta-ketoacyl-[acyl-carrier-protein] synthase III of Xanthomonas campestris pv. campestris (strain ATCC 33913 / DSM 3586 / NCPPB 528 / LMG 568 / P 25).